A 150-amino-acid chain; its full sequence is 3-dehydroquinate dehydratase (150 aa).

Tyrosine 23 functions as the Proton acceptor in the catalytic mechanism. Substrate contacts are provided by asparagine 75, histidine 81, and aspartate 88. Histidine 101 acts as the Proton donor in catalysis. Substrate is bound by residues 102–103 (LS) and arginine 112.

This sequence belongs to the type-II 3-dehydroquinase family. As to quaternary structure, homododecamer.

It carries out the reaction 3-dehydroquinate = 3-dehydroshikimate + H2O. It functions in the pathway metabolic intermediate biosynthesis; chorismate biosynthesis; chorismate from D-erythrose 4-phosphate and phosphoenolpyruvate: step 3/7. In terms of biological role, catalyzes a trans-dehydration via an enolate intermediate. This chain is 3-dehydroquinate dehydratase, found in Pseudomonas savastanoi pv. phaseolicola (strain 1448A / Race 6) (Pseudomonas syringae pv. phaseolicola (strain 1448A / Race 6)).